Consider the following 299-residue polypeptide: ATP phosphoribosyltransferase (299 aa).

Belongs to the ATP phosphoribosyltransferase family. Long subfamily. Equilibrium between an active dimeric form, an inactive hexameric form and higher aggregates. Interconversion between the various forms is largely reversible and is influenced by the natural substrates and inhibitors of the enzyme. Requires Mg(2+) as cofactor.

Its subcellular location is the cytoplasm. It carries out the reaction 1-(5-phospho-beta-D-ribosyl)-ATP + diphosphate = 5-phospho-alpha-D-ribose 1-diphosphate + ATP. It participates in amino-acid biosynthesis; L-histidine biosynthesis; L-histidine from 5-phospho-alpha-D-ribose 1-diphosphate: step 1/9. Its activity is regulated as follows. Feedback inhibited by histidine. Its function is as follows. Catalyzes the condensation of ATP and 5-phosphoribose 1-diphosphate to form N'-(5'-phosphoribosyl)-ATP (PR-ATP). Has a crucial role in the pathway because the rate of histidine biosynthesis seems to be controlled primarily by regulation of HisG enzymatic activity. The polypeptide is ATP phosphoribosyltransferase (Blochmanniella pennsylvanica (strain BPEN)).